The primary structure comprises 267 residues: NLP effector protein 6 (267 aa).

Residues 1–35 (MRTTSPYSHCSHVEMNAGAFVTMLLVALSVCVAAA) form the signal peptide. N-linked (GlcNAc...) asparagine glycosylation occurs at Asn-114. The Conserved undecapeptide motif signature appears at 117–127 (AIMYAWYFPKR). The Conserved heptapeptide motif signature appears at 134-140 (IQRHDWK). N-linked (GlcNAc...) asparagine glycosylation occurs at Asn-192.

It belongs to the Necrosis inducing protein (NPP1) family.

It is found in the secreted. Probable secreted effector that may act as a pathogen-associated molecular pattern (PAMP) recognized by the plant immune system. The chain is NLP effector protein 6 from Plasmopara viticola (Downy mildew of grapevine).